The primary structure comprises 333 residues: T-cell surface glycoprotein CD1b (333 aa).

The first 17 residues, 1–17, serve as a signal peptide directing secretion; that stretch reads MLLLPFQLLAVLFPGGN. Topologically, residues 18–303 are extracellular; sequence SEHAFQGPTS…YWRNPTSIGS (286 aa). Residues N38, N75, and N146 are each glycosylated (N-linked (GlcNAc...) asparagine). 3 disulfides stabilise this stretch: C120/C184, C149/C163, and C224/C279. The Ig-like domain maps to 185–295; the sequence is PRYLLGVLNA…LEGQDIILYW (111 aa). N258 is a glycosylation site (N-linked (GlcNAc...) asparagine). A helical transmembrane segment spans residues 304–324; that stretch reads IVLAIIVPSLLLLLCLALWYM. The Cytoplasmic portion of the chain corresponds to 325 to 333; sequence RRRSYQNIP. The short motif at 329–332 is the Internalization signal element; sequence YQNI.

As to quaternary structure, heterodimer with B2M (beta-2-microglobulin). Interacts with saposin C. As to expression, expressed on cortical thymocytes, on certain T-cell leukemias, and in various other tissues.

Its subcellular location is the cell membrane. The protein resides in the endosome membrane. The protein localises to the lysosome membrane. In terms of biological role, antigen-presenting protein that binds self and non-self lipid and glycolipid antigens and presents them to T-cell receptors on natural killer T-cells. This is T-cell surface glycoprotein CD1b (CD1B) from Homo sapiens (Human).